The primary structure comprises 297 residues: 6-dehydroglucose reductase (297 aa).

Residues Trp20, Arg21, and Asp49 each coordinate NADP(+). The active-site Proton donor is the Tyr54. Positions 54, 98, 129, and 130 each coordinate D-glucose. Residues Ser159, Asn160, Gln181, Ser211, Leu213, Gly215, Gly261, Thr262, Asn263, and Arg267 each contribute to the NADP(+) site.

Belongs to the aldo/keto reductase family. As to quaternary structure, homotrimer.

It carries out the reaction D-glucose + NADP(+) = 6-dehydro-D-glucose + NADPH + H(+). In terms of biological role, part of the sulfoquinovose monooxygenase (sulfo-SMO) pathway, a D-sulfoquinovose degradation pathway that enables the complete utilization of all carbons within sulfoquinovose (SQ) with concomitant production of inorganic sulfite. Catalyzes the NADP-dependent reduction of 6-dehydro-D-glucose to D-glucose. Cannot use NADH. The sequence is that of 6-dehydroglucose reductase from Agrobacterium fabrum (strain C58 / ATCC 33970) (Agrobacterium tumefaciens (strain C58)).